The primary structure comprises 417 residues: MTRFDSIERAVADIAAGKAVVVVDDEDRENEGDLIFAAEKATPELVAFMVRYTSGYLCVPLDGADCDRLGLPPMYATNQDKHGTAYTVTVDAREGIGTGISASDRAATMRLLADPSSGAQDFTRPGHVVPLRAKEGGVLRRPGHTEAAVDLARMADLRPAGVICEIVSQKDEGHMAQTDELRVFADDHNLALISIADLIAWRRKHEKHVERVASARIPTRHGEFTAVGYRSIYDDVEHVALVRGDLPGPDGDGSDVLVRVHSECLTGDVFGSLRCDCGPQLDAALDMVAQEGRGVVLYMRGHEGRGIGLMHKLQAYQLQDAGSDTVDANLELGLPADARDYGIGAQILVDLGISSMRLLTNNPAKRVGLDGYGLQITERVSMPLRANAENLTYLRTKRDRMGHDLIGLDDFEAGEML.

The DHBP synthase stretch occupies residues 1-204; the sequence is MTRFDSIERA…IADLIAWRRK (204 aa). D-ribulose 5-phosphate contacts are provided by residues 28–29, D33, 141–145, and E165; these read RE and RPGHT. Position 29 (E29) interacts with Mg(2+). Residue H144 participates in Mg(2+) binding. Positions 205-417 are GTP cyclohydrolase II; it reads HEKHVERVAS…LDDFEAGEML (213 aa). Residue 259-263 coordinates GTP; it reads RVHSE. Zn(2+)-binding residues include C264, C275, and C277. GTP is bound by residues Q280, 303–305, and T325; that span reads EGR. D337 functions as the Proton acceptor; for GTP cyclohydrolase activity in the catalytic mechanism. The active-site Nucleophile; for GTP cyclohydrolase activity is the R339. The GTP site is built by T360 and K365.

The protein in the N-terminal section; belongs to the DHBP synthase family. It in the C-terminal section; belongs to the GTP cyclohydrolase II family. Requires Mg(2+) as cofactor. The cofactor is Mn(2+). Zn(2+) is required as a cofactor.

It catalyses the reaction D-ribulose 5-phosphate = (2S)-2-hydroxy-3-oxobutyl phosphate + formate + H(+). The enzyme catalyses GTP + 4 H2O = 2,5-diamino-6-hydroxy-4-(5-phosphoribosylamino)-pyrimidine + formate + 2 phosphate + 3 H(+). The protein operates within cofactor biosynthesis; riboflavin biosynthesis; 2-hydroxy-3-oxobutyl phosphate from D-ribulose 5-phosphate: step 1/1. Its pathway is cofactor biosynthesis; riboflavin biosynthesis; 5-amino-6-(D-ribitylamino)uracil from GTP: step 1/4. Catalyzes the conversion of D-ribulose 5-phosphate to formate and 3,4-dihydroxy-2-butanone 4-phosphate. In terms of biological role, catalyzes the conversion of GTP to 2,5-diamino-6-ribosylamino-4(3H)-pyrimidinone 5'-phosphate (DARP), formate and pyrophosphate. The chain is Riboflavin biosynthesis protein RibBA from Rhodococcus jostii (strain RHA1).